A 386-amino-acid chain; its full sequence is G2/mitotic-specific cyclin-B2 (386 aa).

A disordered region spans residues 45–64 (TNGKVGPSKKPSKASCAQKP).

Belongs to the cyclin family. Cyclin AB subfamily. In terms of assembly, interacts with the CDK1 protein kinase to form a serine/threonine kinase holoenzyme complex also known as maturation promoting factor (MPF). The cyclin subunit imparts substrate specificity to the complex.

In terms of biological role, essential for the control of the cell cycle at the G2/M (mitosis) transition. The polypeptide is G2/mitotic-specific cyclin-B2 (ccnb2) (Oryzias luzonensis (Luzon ricefish)).